The primary structure comprises 247 residues: Ubiquinone biosynthesis O-methyltransferase (247 aa).

Residues arginine 41, glycine 72, aspartate 93, and methionine 136 each coordinate S-adenosyl-L-methionine.

Belongs to the methyltransferase superfamily. UbiG/COQ3 family.

The catalysed reaction is a 3-demethylubiquinol + S-adenosyl-L-methionine = a ubiquinol + S-adenosyl-L-homocysteine + H(+). It catalyses the reaction a 3-(all-trans-polyprenyl)benzene-1,2-diol + S-adenosyl-L-methionine = a 2-methoxy-6-(all-trans-polyprenyl)phenol + S-adenosyl-L-homocysteine + H(+). Its pathway is cofactor biosynthesis; ubiquinone biosynthesis. Its function is as follows. O-methyltransferase that catalyzes the 2 O-methylation steps in the ubiquinone biosynthetic pathway. The protein is Ubiquinone biosynthesis O-methyltransferase of Bartonella tribocorum (strain CIP 105476 / IBS 506).